A 163-amino-acid polypeptide reads, in one-letter code: MTTLVVFIQVQGRPGIIETKLGPATTIGELKAALAAVGVNIDVETFIYVEDAENHLHGEHHEPAYGVKHGCRIHVSRCKRIRATVHYLDKTETRDFAPGARIRAVKAHAVDVFHIPPKDAGEHVLQLCNSLERPASDTPLHTLADHNTCAVCFDLVPEKRIEG.

Ubiquitin-like BIL-type domains follow at residues Leu-4–Arg-80 and Ile-81–Gly-163. Gly-163 is covalently cross-linked (Glycyl lysine isopeptide (Gly-Lys) (interchain with K-? in central tail fiber acceptor protein)).

Functionally, component of the Bil (bacterial ISG15-like) antiviral defense system, composed of BilA, BilB, BilC and BilD. The Bil system specifically conjugates a ubiquitin-like moiety (bilA) to the bacteriophage central tail fiber (CTF, or tip attachment protein J) via reactions involving E1 (bilD) and E2 (bilB). Modifies CTF of phage SECphi27 and SECphi4, which probably interferes with assembly of the phage tail. Also modifies T5 baseplate hub protein pb3 (gene D16), but not gp27 of phage T6 (Bil defends against T6). Bil-encoding bacteria produce mostly defective phage SECphi27, many of which have phage assembly defects, including no tails. SECphi27 phage progeny produced in E.coli with the Bil system inject less DNA into naive host cells, maybe because the phage are less able to adsorb and inject their DNA into host cells. In terms of biological role, expression of the Bil system in E.coli (strain MG1655) confers about 100-fold resistance to phage SECphi27, SECphi18, SECphi6, SECphi4 and T5, but not to SECphi17. When cells expressing the Bil system are infected by phage SECphi27 at low multiplicity of infection (0.03 MOI) the culture survives, at 3.0 MOI the culture collapses at the same time as cells without the Bil system. This chain is Bacterial ISG15-like ubiquitin-like protein BilA, found in Collimonas sp. (strain OK412).